We begin with the raw amino-acid sequence, 198 residues long: MSSARELLRKVKQERLGQKRGLKASSQELKRQKTRDHKSFENLGRDQSRELAVSDFNEKQSTEPPKDTRAVSALPENFFDESIAKNKELIEEEWNDFQNEIGIIEENAVEQEITLQQQQLLAEKDEENEIADNDLEPEVYDILYEEESKLGESRDLIRRLKQKRFETKKNNFSVKESSNLSNNDSDASLDEDTLLWGL.

2 disordered regions span residues 15 to 69 (RLGQ…KDTR) and 172 to 198 (FSVK…LWGL). Basic and acidic residues-rich tracts occupy residues 37-49 (HKSF…DQSR) and 56-69 (FNEK…KDTR). The segment covering 176–186 (ESSNLSNNDSD) has biased composition (low complexity). Residues 187–198 (ASLDEDTLLWGL) are compositionally biased toward acidic residues.

The protein resides in the nucleus. This is an uncharacterized protein from Schizosaccharomyces pombe (strain 972 / ATCC 24843) (Fission yeast).